A 556-amino-acid polypeptide reads, in one-letter code: Formate--tetrahydrofolate ligase 1 (556 aa).

An ATP-binding site is contributed by 65 to 72 (TPAGEGKS).

The protein belongs to the formate--tetrahydrofolate ligase family.

The enzyme catalyses (6S)-5,6,7,8-tetrahydrofolate + formate + ATP = (6R)-10-formyltetrahydrofolate + ADP + phosphate. It participates in one-carbon metabolism; tetrahydrofolate interconversion. The polypeptide is Formate--tetrahydrofolate ligase 1 (Streptococcus pyogenes serotype M18 (strain MGAS8232)).